The chain runs to 214 residues: ATP phosphoribosyltransferase (214 aa).

Belongs to the ATP phosphoribosyltransferase family. Short subfamily. In terms of assembly, heteromultimer composed of HisG and HisZ subunits.

It localises to the cytoplasm. The enzyme catalyses 1-(5-phospho-beta-D-ribosyl)-ATP + diphosphate = 5-phospho-alpha-D-ribose 1-diphosphate + ATP. Its pathway is amino-acid biosynthesis; L-histidine biosynthesis; L-histidine from 5-phospho-alpha-D-ribose 1-diphosphate: step 1/9. Catalyzes the condensation of ATP and 5-phosphoribose 1-diphosphate to form N'-(5'-phosphoribosyl)-ATP (PR-ATP). Has a crucial role in the pathway because the rate of histidine biosynthesis seems to be controlled primarily by regulation of HisG enzymatic activity. The sequence is that of ATP phosphoribosyltransferase from Halorhodospira halophila (strain DSM 244 / SL1) (Ectothiorhodospira halophila (strain DSM 244 / SL1)).